A 118-amino-acid chain; its full sequence is Small ribosomal subunit protein uS13 (118 aa).

Positions 91–118 are disordered; sequence HRRSLPVRGQRTKTNARTRKGPRKPIKA.

It belongs to the universal ribosomal protein uS13 family. As to quaternary structure, part of the 30S ribosomal subunit. Forms a loose heterodimer with protein S19. Forms two bridges to the 50S subunit in the 70S ribosome.

Functionally, located at the top of the head of the 30S subunit, it contacts several helices of the 16S rRNA. In the 70S ribosome it contacts the 23S rRNA (bridge B1a) and protein L5 of the 50S subunit (bridge B1b), connecting the 2 subunits; these bridges are implicated in subunit movement. Contacts the tRNAs in the A and P-sites. The sequence is that of Small ribosomal subunit protein uS13 from Francisella philomiragia subsp. philomiragia (strain ATCC 25017 / CCUG 19701 / FSC 153 / O#319-036).